A 292-amino-acid chain; its full sequence is NAD kinase (292 aa).

Asp73 acts as the Proton acceptor in catalysis. NAD(+)-binding positions include 73 to 74 (DG), 147 to 148 (NE), His158, Arg175, Asp177, 188 to 193 (TAYSLS), and Gln247.

Belongs to the NAD kinase family. Requires a divalent metal cation as cofactor.

The protein localises to the cytoplasm. The catalysed reaction is NAD(+) + ATP = ADP + NADP(+) + H(+). Its function is as follows. Involved in the regulation of the intracellular balance of NAD and NADP, and is a key enzyme in the biosynthesis of NADP. Catalyzes specifically the phosphorylation on 2'-hydroxyl of the adenosine moiety of NAD to yield NADP. The protein is NAD kinase of Erwinia tasmaniensis (strain DSM 17950 / CFBP 7177 / CIP 109463 / NCPPB 4357 / Et1/99).